A 48-amino-acid chain; its full sequence is Large ribosomal subunit protein bL34c (48 aa).

This sequence belongs to the bacterial ribosomal protein bL34 family.

It localises to the plastid. Its subcellular location is the chloroplast. This chain is Large ribosomal subunit protein bL34c, found in Thalassiosira pseudonana (Marine diatom).